A 415-amino-acid chain; its full sequence is Thyroxine-binding globulin (415 aa).

The first 20 residues, 1 to 20 (MSPFLYLVLLVLGLHATIHC), serve as a signal peptide directing secretion. N-linked (GlcNAc...) (complex) asparagine glycosylation is present at N36. N99 carries an N-linked (GlcNAc...) asparagine glycan. An N-linked (GlcNAc...) asparagine; in variant Gary glycan is attached at I116. N165 and N253 each carry an N-linked (GlcNAc...) asparagine glycan. N293 and R398 together coordinate thyroxine.

The protein belongs to the serpin family. As to expression, expressed by the liver and secreted in plasma.

It is found in the secreted. Its function is as follows. Major thyroid hormone transport protein in serum. This Homo sapiens (Human) protein is Thyroxine-binding globulin (SERPINA7).